A 424-amino-acid chain; its full sequence is MSKYALLQKMIINELLFLNDNVNYATNKLFSKDQANGELHKLLAMLLNYKKSNENAPNIKFDLKNLSFMLENKDKIDIIQFDDIKNYVQPAIVNLFESHNRSLNNYSTELSTLLEDGNENLVPNITDIDNIKLSHMQLARLLCYTAVVESRNSKPWKAIFNNDTNVLTDSFFNHIMNILNMIKTNQGSLAHNVSVVYHIENIQMNLENKLKPRSITIETVDKDKFENKHSDIEVCYVMNNSLHPQDVNSQQTLMCSSFVELNVLPFCLYNDTLPDDQSMSVFNLYKFEQTKNKSVSKPSRLGNVMFVNSLIDKPITRETIVNIINSYHNACQNLKRSGHRVVGDYRAYERDYKLAALDFIILMLVTSITHRTLKYNMLNIHEKMFQELKTVVCKHNAAKLYDILINYDINKEPLNNFRYNYEVL.

It is found in the host cytoplasm. Its function is as follows. Plays a role in per os infectivity in vivo. Facilitates embedding of occlusion-derived viruses (ODVs) into occlusion bodies (OBs). In Lepidoptera (butterflies and moths), this protein is Protein ORF114.